Here is a 1026-residue protein sequence, read N- to C-terminus: Multidrug resistance protein MdtC (1026 aa).

11 consecutive transmembrane segments (helical) span residues 15–35, 333–353, 360–380, 387–407, 431–451, 463–483, 528–548, 853–873, 897–917, 953–973, and 984–1004; these read ILIA…LPVA, EVEE…FLFL, LIPA…MYLC, LSLM…IVVL, VGFT…PLLL, FAVT…TLTP, LVGV…IAIP, LILI…LYES, LFNA…IGIV, PIMM…LSGG, and ITIV…TPVV.

The protein belongs to the resistance-nodulation-cell division (RND) (TC 2.A.6) family. MdtC subfamily. As to quaternary structure, part of a tripartite efflux system composed of MdtA, MdtB and MdtC. MdtC forms a heteromultimer with MdtB.

Its subcellular location is the cell inner membrane. The polypeptide is Multidrug resistance protein MdtC (Salmonella agona (strain SL483)).